The primary structure comprises 493 residues: Neisserial heparin binding antigen (493 aa).

The N-terminal stretch at 1–22 (MKEMMMFKRSVIAMACIFALSA) is a signal peptide. C23 carries the N-palmitoyl cysteine lipid modification. A lipid anchor (S-diacylglycerol cysteine) is attached at C23. The disordered stretch occupies residues 27-206 (GGGSPDVKSA…NPAPANGGSN (180 aa)). Basic and acidic residues predominate over residues 48-58 (SEKETEAKEDA). Positions 59 to 75 (PQAGSQGQGAPSAQGSQ) are enriched in low complexity. 2 stretches are compositionally biased toward polar residues: residues 106–123 (DMPQ…NHTP) and 132–147 (MENQ…QPAN). Residues 165–188 (AGGQNAGNTAAQGANQAGNNQAAG) show a composition bias toward low complexity. The Arg-rich motif signature appears at 301 to 311 (RFRRSARSRRS).

This sequence belongs to the NHBA family. In terms of assembly, the C-terminal beta-barrel forms a monomer. In terms of processing, cleaved in vivo by the Neisserial phase-variable autotransporter/serine protease NalP to give 2 fragments. The N-terminus remains in the cell outer membrane while the C-terminus (beginning on Ser-298) is soluble; this soluble fragment is called C2. Cleaved in vitro by human lactoferrin (LTF, between Arg-310 and Ser-311), this fragment is called C1. Recombinant and cell surface protein is cleaved by human saliva kallikrein (KLK1) between Ser-308 and Arg-309; in saliva kallikrein is more active on NHBA than lactoferrin. Human plasma kallikrein (KLKB1) cleaves in a similar manner to KLK1.

It is found in the cell outer membrane. In terms of biological role, a major human immunogenic protein detected in patients recovering from meningitidis, where it induces bactericidal antibodies. Binds human cells, heparin and heparan sulfate proteoglycan in vitro via the Arg-rich motif. Heparin-binding to this protein protects bacteria against killing by bactericidal antibodies (serum killing). The bacteria binds a number of human extracellular sialyated and/or sulfated glycans via this protein, including chondroitin sulfate, heparin and ganglioside GT3. Whole protein binds DNA. Its function is as follows. Plays a role in extracellular-DNA (eDNA) mediated biofilm formation. In some strains (including cc32 strain H44/76 but not cc11 strain B16B6) eDNA stimulates biofilm formation. When NHBA is not processed by NalP, biofilm formation increases. This is probably because the number of positively charged, NHBA- and IgA-derived DNA-binding peptides on the cell surface rises, resulting in increased DNA-binding peptides and increased biofilm formation. This chain is Neisserial heparin binding antigen, found in Neisseria meningitidis serogroup B / serotype 15 (strain H44/76).